A 148-amino-acid chain; its full sequence is Phosphopantetheine adenylyltransferase (148 aa).

This sequence belongs to the eukaryotic CoaD family.

It localises to the cytoplasm. The enzyme catalyses (R)-4'-phosphopantetheine + ATP + H(+) = 3'-dephospho-CoA + diphosphate. The protein operates within cofactor biosynthesis; coenzyme A biosynthesis. In terms of biological role, reversibly transfers an adenylyl group from ATP to 4'-phosphopantetheine, yielding dephospho-CoA (dPCoA) and pyrophosphate. This is Phosphopantetheine adenylyltransferase from Archaeoglobus fulgidus (strain ATCC 49558 / DSM 4304 / JCM 9628 / NBRC 100126 / VC-16).